The sequence spans 343 residues: Protein RecA (343 aa).

65–72 (GPESSGKT) contributes to the ATP binding site.

This sequence belongs to the RecA family.

It is found in the cytoplasm. Functionally, can catalyze the hydrolysis of ATP in the presence of single-stranded DNA, the ATP-dependent uptake of single-stranded DNA by duplex DNA, and the ATP-dependent hybridization of homologous single-stranded DNAs. It interacts with LexA causing its activation and leading to its autocatalytic cleavage. The protein is Protein RecA of Xanthomonas campestris pv. campestris (strain 8004).